The sequence spans 425 residues: Histidine--tRNA ligase (425 aa).

Belongs to the class-II aminoacyl-tRNA synthetase family. In terms of assembly, homodimer.

The protein resides in the cytoplasm. It catalyses the reaction tRNA(His) + L-histidine + ATP = L-histidyl-tRNA(His) + AMP + diphosphate + H(+). This chain is Histidine--tRNA ligase, found in Tolumonas auensis (strain DSM 9187 / NBRC 110442 / TA 4).